Here is a 138-residue protein sequence, read N- to C-terminus: Large ribosomal subunit protein uL16 (138 aa).

Residues 1–15 are compositionally biased toward basic residues; the sequence is MLSPKKVKYRKKQRG. Residues 1 to 21 are disordered; it reads MLSPKKVKYRKKQRGRLSGEA.

The protein belongs to the universal ribosomal protein uL16 family. Part of the 50S ribosomal subunit.

Its function is as follows. Binds 23S rRNA and is also seen to make contacts with the A and possibly P site tRNAs. This is Large ribosomal subunit protein uL16 from Borrelia garinii subsp. bavariensis (strain ATCC BAA-2496 / DSM 23469 / PBi) (Borreliella bavariensis).